Reading from the N-terminus, the 203-residue chain is tRNA (cytidine(56)-2'-O)-methyltransferase (203 aa).

S-adenosyl-L-methionine contacts are provided by residues L80, 109–113 (GAEKV), and 127–134 (IGNQPHSE). Residues 178–203 (AEQDKAEGKATPGKNWENSGFTGDNP) form a disordered region. Over residues 193-203 (WENSGFTGDNP) the composition is skewed to polar residues.

Belongs to the aTrm56 family. Homodimer.

The protein localises to the cytoplasm. It catalyses the reaction cytidine(56) in tRNA + S-adenosyl-L-methionine = 2'-O-methylcytidine(56) in tRNA + S-adenosyl-L-homocysteine + H(+). Specifically catalyzes the AdoMet-dependent 2'-O-ribose methylation of cytidine at position 56 in tRNAs. The protein is tRNA (cytidine(56)-2'-O)-methyltransferase of Pyrococcus horikoshii (strain ATCC 700860 / DSM 12428 / JCM 9974 / NBRC 100139 / OT-3).